We begin with the raw amino-acid sequence, 186 residues long: UPF0301 protein Tgr7_2910 (186 aa).

Belongs to the UPF0301 (AlgH) family.

The sequence is that of UPF0301 protein Tgr7_2910 from Thioalkalivibrio sulfidiphilus (strain HL-EbGR7).